The primary structure comprises 95 residues: Nickel and cobalt resistance protein CnrY (95 aa).

Residues 1–45 lie on the Cytoplasmic side of the membrane; sequence MADVEEWLTHARKVTQEASIGVDVTSIQECISAEPAQRVLVARRD. The chain crosses the membrane as a helical span at residues 46–68; that stretch reads AWRAICCAAFAALVAFAAINRVA. Over 69-95 the chain is Periplasmic; sequence TIMLEKPAPTWVATPSAASPFGLLIGK.

To A.xylosoxydans NccY.

Its subcellular location is the cell inner membrane. In terms of biological role, nickel and cobalt resistance proteins CnrA, CnrB, CnrC CnrH and CnrR may be involved in the regulation of CNR. Its function is as follows. CnrH alone is able to activate cnr expression, and both CnrY and CrnX are needed for nickel induction of CnrH. In the absence of wild-type CnrY (due either to a frameshift, PubMed:10671463 or absence of the transcript, PubMed:10671464), nickel and cobalt resistance is constitutive, indicating that CrnY may act as a repressor or an anti-sigma factor. The chain is Nickel and cobalt resistance protein CnrY (cnrY) from Cupriavidus metallidurans (strain ATCC 43123 / DSM 2839 / NBRC 102507 / CH34) (Ralstonia metallidurans).